The chain runs to 245 residues: 1-acyl-sn-glycerol-3-phosphate acyltransferase (245 aa).

The residue at position 1 (Met-1) is an N-formylmethionine. Residues 73–78 (HQNNYD) carry the HXXXXD motif motif.

It belongs to the 1-acyl-sn-glycerol-3-phosphate acyltransferase family.

Its subcellular location is the cell inner membrane. The enzyme catalyses a 1-acyl-sn-glycero-3-phosphate + an acyl-CoA = a 1,2-diacyl-sn-glycero-3-phosphate + CoA. The catalysed reaction is a fatty acyl-[ACP] + a 1-acyl-sn-glycero-3-phosphate = a 1,2-diacyl-sn-glycero-3-phosphate + holo-[ACP]. The protein operates within phospholipid metabolism; CDP-diacylglycerol biosynthesis; CDP-diacylglycerol from sn-glycerol 3-phosphate: step 2/3. In terms of biological role, converts lysophosphatidic acid (LPA) into phosphatidic acid by incorporating an acyl moiety at the 2 position. This enzyme can utilize either acyl-CoA or acyl-ACP as the fatty acyl donor. This chain is 1-acyl-sn-glycerol-3-phosphate acyltransferase (plsC), found in Escherichia coli (strain K12).